We begin with the raw amino-acid sequence, 32 residues long: Phospholipase A2 (32 aa).

Ca(2+) contacts are provided by Tyr-16, Gly-18, and Gly-20.

Requires Ca(2+) as cofactor. Expressed by the venom gland.

Its subcellular location is the secreted. The enzyme catalyses a 1,2-diacyl-sn-glycero-3-phosphocholine + H2O = a 1-acyl-sn-glycero-3-phosphocholine + a fatty acid + H(+). Its function is as follows. PLA2 catalyzes the calcium-dependent hydrolysis of the 2-acyl groups in 3-sn-phosphoglycerides. The chain is Phospholipase A2 from Micrurus lemniscatus (South American coral snake).